A 2138-amino-acid chain; its full sequence is Protein virilizer homolog (2138 aa).

Disordered stretches follow at residues 1503 to 1574 (RLPQ…SMHV), 1638 to 1664 (NPTP…DDLQ), 1855 to 1881 (PVIP…SSGG), 2013 to 2035 (PMQP…QGVS), and 2058 to 2094 (YYHP…QESG). Positions 1528–1541 (ENSSVDIPTQNSIQ) are enriched in polar residues. Polar residues-rich tracts occupy residues 1862-1881 (DSLS…SSGG) and 2025-2035 (QISQPSEQGVS).

The protein belongs to the vir family. As to quaternary structure, interacts with MTB, FIP37 and HAKAI. Associates with MTA, MTB, FIP37 and HAKAI to form the m6A writer complex which is essential for adenosine methylation at specific mRNA sequences.

The protein resides in the nucleus speckle. The protein localises to the nucleus. It is found in the nucleoplasm. In terms of biological role, subunit of the N6-methyltransferase complex, a multiprotein complex that mediates N6-methyladenosine (m6A) methylation at the 5'-[AG]GAC-3' consensus sites of some mRNAs. Associates with MTA, MTB, FIP37 and HAKAI to form the m6A writer complex which is essential for adenosine methylation at specific mRNA sequences. N6-methyladenosine (m6A) plays a role in mRNA stability, processing, translation efficiency and editing. In Arabidopsis thaliana (Mouse-ear cress), this protein is Protein virilizer homolog.